A 167-amino-acid polypeptide reads, in one-letter code: Ribonuclease H (167 aa).

Residues 1 to 143 form the RNase H type-1 domain; sequence MYKQIEIFTD…CDQLARKAAK (143 aa). D10, E48, D70, and D135 together coordinate Mg(2+).

The protein belongs to the RNase H family. As to quaternary structure, monomer. It depends on Mg(2+) as a cofactor.

Its subcellular location is the cytoplasm. The enzyme catalyses Endonucleolytic cleavage to 5'-phosphomonoester.. Endonuclease that specifically degrades the RNA of RNA-DNA hybrids. In Blochmanniella floridana, this protein is Ribonuclease H.